We begin with the raw amino-acid sequence, 333 residues long: tRNA N6-adenosine threonylcarbamoyltransferase (333 aa).

Residues His-111 and His-115 each contribute to the Fe cation site. Substrate is bound by residues 134–138, Asp-167, Gly-180, and Asn-272; that span reads LVSGG. Residue Asp-300 participates in Fe cation binding.

This sequence belongs to the KAE1 / TsaD family. Fe(2+) serves as cofactor.

The protein resides in the cytoplasm. It catalyses the reaction L-threonylcarbamoyladenylate + adenosine(37) in tRNA = N(6)-L-threonylcarbamoyladenosine(37) in tRNA + AMP + H(+). Required for the formation of a threonylcarbamoyl group on adenosine at position 37 (t(6)A37) in tRNAs that read codons beginning with adenine. Is involved in the transfer of the threonylcarbamoyl moiety of threonylcarbamoyl-AMP (TC-AMP) to the N6 group of A37, together with TsaE and TsaB. TsaD likely plays a direct catalytic role in this reaction. In Legionella pneumophila (strain Paris), this protein is tRNA N6-adenosine threonylcarbamoyltransferase.